The primary structure comprises 729 residues: MGRRKKIVQECERLMDEPEQIRNIAIAAHVDHGKTTLTDNLLAGAGMISDETAGEQLAMDTEEDEQERGITIDAANVSMTHEYEDENHLINLIDTPGHVDFGGDVTRAMRAVDGALVVVDAVEGAMPQTETVLRQALREGVKPTLFINKVDRLISELQEGPEEMQQRLTGVIGDVNELIRGMTEEMDDINEDWTVSVEDGTVGFGSALYKWGVSMPSMQRTGMDFGEIIELERADKRQELHERTPLSDVVLDMVCEHFPNPVDAQPRRIPRIWRGDADSEVAEAMELVNEDGELVMMVTDIGIDPHAGEIAAGRVFSGTIEKGQDLYVSGTAGTNRVQSVGIYMGGEREEVERVPAGNIAAVTGLKDAIAGSTVSSVEMTPFESIEHISEPVITKSVEAKNMDDLPKLIETLQQVAKEDPTIQIEINEDTGEHLISGQGELHLEVITQRIERNQGIPVNTGEPIVVFREAPQQESREVEGRSPNNHNRFYITVEPLEDDIVETIKMGDVSMDMPELERREELMEQGMDKDTAQNVETIHNTNVFIDDTKGIQHLNETMELVVEGLEEALNDGPLAAEPVEGALIRLHDARLHEDAIHRGPAQVIPAVREAVHNALIDAEIKLLEPIQEVRIDVPNEHMGAASGEIQGRRGRVDDMYQEGDLMVVEGVAPVDEMIGFSSDIRSATEGRASWNTENAGFRVMADNLQPETIDEIRERKGMKLELPEQIDYF.

The region spanning 19–262 (EQIRNIAIAA…MVCEHFPNPV (244 aa)) is the tr-type G domain. GTP contacts are provided by residues 28 to 35 (AHVDHGKT), 94 to 98 (DTPGH), and 148 to 151 (NKVD). Position 597 is a diphthamide (histidine 597).

The protein belongs to the TRAFAC class translation factor GTPase superfamily. Classic translation factor GTPase family. EF-G/EF-2 subfamily.

The protein resides in the cytoplasm. Its function is as follows. Catalyzes the GTP-dependent ribosomal translocation step during translation elongation. During this step, the ribosome changes from the pre-translocational (PRE) to the post-translocational (POST) state as the newly formed A-site-bound peptidyl-tRNA and P-site-bound deacylated tRNA move to the P and E sites, respectively. Catalyzes the coordinated movement of the two tRNA molecules, the mRNA and conformational changes in the ribosome. The polypeptide is Elongation factor 2 (Natronomonas pharaonis (strain ATCC 35678 / DSM 2160 / CIP 103997 / JCM 8858 / NBRC 14720 / NCIMB 2260 / Gabara) (Halobacterium pharaonis)).